The chain runs to 543 residues: CTP synthase (543 aa).

Residues 1–265 (MARYIFITGG…DDEVLAAFAI (265 aa)) are amidoligase domain. Ser-13 contributes to the CTP binding site. Residue Ser-13 coordinates UTP. Residue 14 to 19 (SLGKGL) participates in ATP binding. Tyr-54 contributes to the L-glutamine binding site. Asp-71 provides a ligand contact to ATP. Mg(2+) contacts are provided by Asp-71 and Glu-139. Residues 146 to 148 (DIE), 186 to 191 (KTKPTQ), and Lys-222 contribute to the CTP site. Residues 186–191 (KTKPTQ) and Lys-222 each bind UTP. 238–240 (RDA) is a binding site for ATP. In terms of domain architecture, Glutamine amidotransferase type-1 spans 291–542 (TIAIVGKYTG…IEAALVRSRL (252 aa)). Gly-353 serves as a coordination point for L-glutamine. Cys-380 acts as the Nucleophile; for glutamine hydrolysis in catalysis. Residues 381–384 (FGMQ), Glu-404, and Arg-470 contribute to the L-glutamine site. Active-site residues include His-515 and Glu-517.

The protein belongs to the CTP synthase family. Homotetramer.

It carries out the reaction UTP + L-glutamine + ATP + H2O = CTP + L-glutamate + ADP + phosphate + 2 H(+). The catalysed reaction is L-glutamine + H2O = L-glutamate + NH4(+). The enzyme catalyses UTP + NH4(+) + ATP = CTP + ADP + phosphate + 2 H(+). The protein operates within pyrimidine metabolism; CTP biosynthesis via de novo pathway; CTP from UDP: step 2/2. Allosterically activated by GTP, when glutamine is the substrate; GTP has no effect on the reaction when ammonia is the substrate. The allosteric effector GTP functions by stabilizing the protein conformation that binds the tetrahedral intermediate(s) formed during glutamine hydrolysis. Inhibited by the product CTP, via allosteric rather than competitive inhibition. In terms of biological role, catalyzes the ATP-dependent amination of UTP to CTP with either L-glutamine or ammonia as the source of nitrogen. Regulates intracellular CTP levels through interactions with the four ribonucleotide triphosphates. In Rhodopseudomonas palustris (strain HaA2), this protein is CTP synthase.